Reading from the N-terminus, the 392-residue chain is uncharacterized protein (392 aa).

This sequence belongs to the ROK (NagC/XylR) family.

This is an uncharacterized protein from Sinorhizobium fredii (strain NBRC 101917 / NGR234).